We begin with the raw amino-acid sequence, 915 residues long: Isoleucine--tRNA ligase (915 aa).

Residues 64–74 (PYANGNFHVGH) carry the 'HIGH' region motif. Glu557 is an L-isoleucyl-5'-AMP binding site. The 'KMSKS' region motif lies at 598-602 (AMSKS). Lys601 provides a ligand contact to ATP. Residues Cys887, Cys890, Cys902, and Cys905 each coordinate Zn(2+).

Belongs to the class-I aminoacyl-tRNA synthetase family. IleS type 1 subfamily. In terms of assembly, monomer. Requires Zn(2+) as cofactor.

It is found in the cytoplasm. It catalyses the reaction tRNA(Ile) + L-isoleucine + ATP = L-isoleucyl-tRNA(Ile) + AMP + diphosphate. Functionally, catalyzes the attachment of isoleucine to tRNA(Ile). As IleRS can inadvertently accommodate and process structurally similar amino acids such as valine, to avoid such errors it has two additional distinct tRNA(Ile)-dependent editing activities. One activity is designated as 'pretransfer' editing and involves the hydrolysis of activated Val-AMP. The other activity is designated 'posttransfer' editing and involves deacylation of mischarged Val-tRNA(Ile). This Leptospira biflexa serovar Patoc (strain Patoc 1 / ATCC 23582 / Paris) protein is Isoleucine--tRNA ligase.